A 488-amino-acid chain; its full sequence is Multidrug resistance outer membrane protein MdtP (488 aa).

The signal sequence occupies residues 1–23 (MINRQLSRLLLCSILGSTTLISG). The N-palmitoyl cysteine moiety is linked to residue cysteine 24. Residue cysteine 24 is the site of S-diacylglycerol cysteine attachment.

The protein belongs to the outer membrane factor (OMF) (TC 1.B.17) family. In terms of assembly, could be part of a tripartite efflux system composed of MdtN, MdtO and MdtP.

The protein resides in the cell outer membrane. In terms of biological role, could be involved in resistance to puromycin, acriflavine and tetraphenylarsonium chloride. The chain is Multidrug resistance outer membrane protein MdtP (mdtP) from Escherichia coli O6:H1 (strain CFT073 / ATCC 700928 / UPEC).